A 417-amino-acid chain; its full sequence is Putative competence-damage inducible protein (417 aa).

This sequence belongs to the CinA family.

The chain is Putative competence-damage inducible protein from Leuconostoc citreum (strain KM20).